We begin with the raw amino-acid sequence, 95 residues long: NELL2-interacting cell ontogeny regulator 1 (95 aa).

An N-terminal signal peptide occupies residues 1-34 (MAPPPACRSPMSPPPPPLLLLLLSLALLGARARA).

Belongs to the NICOL family. Interacts with NELL2; triggers epididymal differentiation. Interacts with cell surface receptor TFRC; the interaction mediates uptake of NICOL1 into fibroblasts. As to expression, detected in the brain (at protein level). Also expressed at low levels in the kidney, primarily in tubular epithelial cells.

Its subcellular location is the secreted. It is found in the cytoplasm. It localises to the perinuclear region. Functionally, mRNA-binding protein which interacts with a range of target mRNAs including SERPINE1, ACTA2, CCN2 and COL4A1 and may promote extracellular matrix production. Binds to the 3'-UTR of SERPINE1 mRNA and stabilizes the mRNA, possibly by competing for binding with SERBP1 and preventing SERBP1-mediated mRNA degradation. Also binds to the 3'-UTR of ACTA2. Testis-derived lumicrine factor that triggers epididymal differentiation and sperm maturation. This chain is NELL2-interacting cell ontogeny regulator 1, found in Homo sapiens (Human).